Reading from the N-terminus, the 106-residue chain is Large ribosomal subunit protein uL24 (106 aa).

Belongs to the universal ribosomal protein uL24 family. In terms of assembly, part of the 50S ribosomal subunit.

Functionally, one of two assembly initiator proteins, it binds directly to the 5'-end of the 23S rRNA, where it nucleates assembly of the 50S subunit. Its function is as follows. One of the proteins that surrounds the polypeptide exit tunnel on the outside of the subunit. The chain is Large ribosomal subunit protein uL24 from Dechloromonas aromatica (strain RCB).